A 292-amino-acid polypeptide reads, in one-letter code: Probable starch degradation products transport system permease protein AmyD (292 aa).

The next 6 membrane-spanning stretches (helical) occupy residues 15–35 (WLFIAPTLLSLIIVVLIPFII), 77–97 (FAVACIVIINVVGLSLAMLVT), 110–130 (FYLPNLIGGLILGFIWNFIFV), 156–176 (FWGLVIVTSWQMIGYVMVIYI), 205–225 (VFPLIAPAFTVSLFITLSNSF), and 260–280 (MAVGQAKAVIMFLIIAVISVI). The ABC transmembrane type-1 domain occupies 71–281 (IIFTAKFAVA…LIIAVISVIQ (211 aa)).

This sequence belongs to the binding-protein-dependent transport system permease family. MalFG subfamily.

Its subcellular location is the cell membrane. Functionally, probably part of a binding-protein-dependent transport system starch degradation products. Probably responsible for the translocation of the substrate across the membrane. This Thermoanaerobacterium thermosulfurigenes (Clostridium thermosulfurogenes) protein is Probable starch degradation products transport system permease protein AmyD (amyD).